We begin with the raw amino-acid sequence, 893 residues long: Major vault protein (893 aa).

At alanine 2 the chain carries N-acetylalanine. MVP repeat units follow at residues 2-56, 57-111, 112-164, 165-217, 218-272, 273-323, 324-379, 380-457, and 458-520; these read ATEE…VPPR, HYCT…DITP, LQVV…EIIQ, ATII…DLVD, AVIL…GVVP, ITTL…IQDV, YVLS…ERQA, IPLD…KTRV, and VSYR…LLGP. A Glycyl lysine isopeptide (Lys-Gly) (interchain with G-Cter in SUMO2) cross-link involves residue lysine 444. A Phosphoserine modification is found at serine 445. Lysine 704 is covalently cross-linked (Glycyl lysine isopeptide (Lys-Gly) (interchain with G-Cter in SUMO2)). The interval 856-893 is disordered; the sequence is QPLGRRVASGPSPGEGISPQSAQAPQAPGDNHVVPVLR.

In terms of assembly, the vault ribonucleoprotein particle is a huge (400 A x 670 A) cage structure of 12.9 MDa. It consists of a dimer of half-vaults, with each half-vault comprising 39 identical major vault protein (MVP) chains, PARP4 and one or more vault RNAs (vRNAs). Interacts with TEP1. Interacts with PTEN and activated MAPK1. The phosphorylated protein interacts with the SH2 domains of PTPN11 and SRC. Interacts with APEX1. May interact with ZNF540. In terms of processing, phosphorylated on Tyr residues after EGF stimulation. Post-translationally, dephosphorylated by PTPN11.

It is found in the cytoplasm. The protein resides in the nucleus. In terms of biological role, required for normal vault structure. Vaults are multi-subunit structures that may act as scaffolds for proteins involved in signal transduction. Vaults may also play a role in nucleo-cytoplasmic transport. Down-regulates IFNG-mediated STAT1 signaling and subsequent activation of JAK. Down-regulates SRC activity and signaling through MAP kinases. The sequence is that of Major vault protein (MVP) from Pongo abelii (Sumatran orangutan).